The sequence spans 478 residues: DNA gyrase subunit B (478 aa).

The Toprim domain occupies 319-438 (CELYLVEGDS…QGYLYVALPP (120 aa)). Mg(2+) is bound by residues Glu-325, Asp-403, and Asp-405.

The protein belongs to the type II topoisomerase GyrB family. Heterotetramer, composed of two GyrA and two GyrB chains. In the heterotetramer, GyrA contains the active site tyrosine that forms a transient covalent intermediate with DNA, while GyrB binds cofactors and catalyzes ATP hydrolysis. Mg(2+) serves as cofactor. Mn(2+) is required as a cofactor. It depends on Ca(2+) as a cofactor.

It localises to the cytoplasm. The enzyme catalyses ATP-dependent breakage, passage and rejoining of double-stranded DNA.. Functionally, a type II topoisomerase that negatively supercoils closed circular double-stranded (ds) DNA in an ATP-dependent manner to modulate DNA topology and maintain chromosomes in an underwound state. Negative supercoiling favors strand separation, and DNA replication, transcription, recombination and repair, all of which involve strand separation. Also able to catalyze the interconversion of other topological isomers of dsDNA rings, including catenanes and knotted rings. Type II topoisomerases break and join 2 DNA strands simultaneously in an ATP-dependent manner. The protein is DNA gyrase subunit B (gyrB) of Eisenibacter elegans (Flexibacter elegans).